Reading from the N-terminus, the 448-residue chain is NADP-specific glutamate dehydrogenase (448 aa).

Residues Lys88, Gln109, and Lys112 each coordinate substrate. Lys124 (proton donor) is an active-site residue. Gly163 contacts substrate. Residues Thr207 and Asn238 each contribute to the NADP(+) site. A substrate-binding site is contributed by Ser375.

The protein belongs to the Glu/Leu/Phe/Val dehydrogenases family. Homohexamer.

It catalyses the reaction L-glutamate + NADP(+) + H2O = 2-oxoglutarate + NH4(+) + NADPH + H(+). Its function is as follows. Catalyzes the reversible oxidative deamination of glutamate to alpha-ketoglutarate and ammonia. The chain is NADP-specific glutamate dehydrogenase (gdhA) from Psychrobacter sp. (strain TAD1).